A 396-amino-acid chain; its full sequence is MMKTVNELIKDINSLTSHLHEKDFLLTWEQTPDELKQVLDVAAALKALRAENISTKVFNSGLGISVFRDNSTRTRFSYASALNLLGLAQQDLDEGKSQIAHGETVRETANMISFCADAIGIRDDMYLGAGNAYMREVGAALDDGYKQGVLPQRPALVNLQCDIDHPTQSMADLAWLREHFGSLENLKGKKIAMTWAYSPSYGKPLSVPQGIIGLMTRFGMDVTLAHPEGYDLIPDVVEVAKNNAKASGGSFRQVTSMEEAFKDADIVYPKSWAPYKVMEERTELLRANDHEGLKALEKQCLAQNAQHKDWHCTEEMMELTRDGEALYMHCLPADISGVSCKEGEVTEGVFEKYRIATYKEASWKPYIIAAMILSRKYAKPGALLEQLLKEAQERVK.

Carbamoyl phosphate contacts are provided by residues 71-74 (STRT), Gln-98, 165-168 (HPTQ), and 330-331 (CL).

This sequence belongs to the aspartate/ornithine carbamoyltransferase superfamily. In terms of assembly, homotrimer.

The protein is Putative carbamoyltransferase YgeW (ygeW) of Escherichia coli O6:H1 (strain CFT073 / ATCC 700928 / UPEC).